Consider the following 46-residue polypeptide: Defensin-1 (46 aa).

4 cysteine pairs are disulfide-bonded: Cys-3–Cys-46, Cys-14–Cys-35, Cys-20–Cys-40, and Cys-24–Cys-42.

Belongs to the DEFL family. As to expression, epidermis and vascular bundles of pods, stems, roots, leaves and wet or dry seeds.

Its function is as follows. Possesses antifungal activity sensitive to inorganic cations. This is Defensin-1 from Pisum sativum (Garden pea).